A 427-amino-acid chain; its full sequence is Histidinol dehydrogenase (427 aa).

Y127, Q185, and N208 together coordinate NAD(+). Positions 232, 254, and 257 each coordinate substrate. The Zn(2+) site is built by Q254 and H257. Catalysis depends on proton acceptor residues E321 and H322. Residues H322, D355, E409, and H414 each coordinate substrate. D355 lines the Zn(2+) pocket. Residue H414 coordinates Zn(2+).

It belongs to the histidinol dehydrogenase family. Zn(2+) is required as a cofactor.

The enzyme catalyses L-histidinol + 2 NAD(+) + H2O = L-histidine + 2 NADH + 3 H(+). It functions in the pathway amino-acid biosynthesis; L-histidine biosynthesis; L-histidine from 5-phospho-alpha-D-ribose 1-diphosphate: step 9/9. In terms of biological role, catalyzes the sequential NAD-dependent oxidations of L-histidinol to L-histidinaldehyde and then to L-histidine. The chain is Histidinol dehydrogenase from Haemophilus influenzae (strain 86-028NP).